Here is a 390-residue protein sequence, read N- to C-terminus: Ribosomal RNA small subunit methyltransferase H (390 aa).

S-adenosyl-L-methionine-binding positions include 47-49 (GGH), aspartate 66, phenylalanine 93, aspartate 122, and glutamine 129. The disordered stretch occupies residues 282–390 (SKTPPGLPID…SHREDVEGEQ (109 aa)). Positions 305–316 (GSEKADEQENNK) are enriched in basic and acidic residues. A compositionally biased stretch (polar residues) spans 348–358 (SGSSTTYSARS). Composition is skewed to basic and acidic residues over residues 360 to 372 (SRHE…REHL) and 381 to 390 (SHREDVEGEQ).

Belongs to the methyltransferase superfamily. RsmH family.

Its subcellular location is the cytoplasm. It catalyses the reaction cytidine(1402) in 16S rRNA + S-adenosyl-L-methionine = N(4)-methylcytidine(1402) in 16S rRNA + S-adenosyl-L-homocysteine + H(+). Functionally, specifically methylates the N4 position of cytidine in position 1402 (C1402) of 16S rRNA. The protein is Ribosomal RNA small subunit methyltransferase H of Corynebacterium kroppenstedtii (strain DSM 44385 / JCM 11950 / CIP 105744 / CCUG 35717).